The sequence spans 503 residues: Probable mitochondrial-processing peptidase subunit alpha-1, mitochondrial (503 aa).

Residues methionine 1–proline 59 constitute a mitochondrion transit peptide.

It belongs to the peptidase M16 family. As to quaternary structure, heterodimer of alpha and beta subunits, forming the mitochondrial processing protease (MPP) in which subunit alpha is involved in substrate recognition and binding and subunit beta is the catalytic subunit. Component of the ubiquinol-cytochrome c oxidoreductase (cytochrome b-c1 complex, complex III, CIII), a multisubunit enzyme composed of 10 subunits. The complex is composed of 3 respiratory subunits cytochrome b (MT-CYB), cytochrome c1 (CYC1-1 or CYC1-2) and Rieske protein (UCR1-1 or UCR1-2), 2 core protein subunits MPPalpha1 (or MPPalpha2) and MPPB, and 5 low-molecular weight protein subunits QCR7-1 (or QCR7-2), UCRQ-1 (or UCRQ-2), QCR9, UCRY and probably QCR6-1 (or QCR6-2). The complex exists as an obligatory dimer and forms supercomplexes (SCs) in the inner mitochondrial membrane with NADH-ubiquinone oxidoreductase (complex I, CI), resulting in different assemblies (supercomplexes SCI(1)III(2) and SCI(2)III(4)).

The protein localises to the mitochondrion matrix. Its subcellular location is the mitochondrion inner membrane. Substrate recognition and binding subunit of the essential mitochondrial processing protease (MPP), which cleaves the mitochondrial sequence off newly imported precursors proteins. In terms of biological role, component of the ubiquinol-cytochrome c oxidoreductase, a multisubunit transmembrane complex that is part of the mitochondrial electron transport chain which drives oxidative phosphorylation. The respiratory chain contains 3 multisubunit complexes succinate dehydrogenase (complex II, CII), ubiquinol-cytochrome c oxidoreductase (cytochrome b-c1 complex, complex III, CIII) and cytochrome c oxidase (complex IV, CIV), that cooperate to transfer electrons derived from NADH and succinate to molecular oxygen, creating an electrochemical gradient over the inner membrane that drives transmembrane transport and the ATP synthase. The cytochrome b-c1 complex catalyzes electron transfer from ubiquinol to cytochrome c, linking this redox reaction to translocation of protons across the mitochondrial inner membrane, with protons being carried across the membrane as hydrogens on the quinol. In the process called Q cycle, 2 protons are consumed from the matrix, 4 protons are released into the intermembrane space and 2 electrons are passed to cytochrome c. The protein is Probable mitochondrial-processing peptidase subunit alpha-1, mitochondrial (MPPalpha1) of Arabidopsis thaliana (Mouse-ear cress).